A 315-amino-acid polypeptide reads, in one-letter code: MAVYNLSINCSPRFVHHVYVPHFTCKSNKSLSHVPMRITMSKQHHHSYFASTTADVDAHLKQSITIKPPLSVHEAMYNFIFSTPPNLAPSLCVAACELVGGHQDQAMAAASALRVIHAAIFTHDHLPLTGRPNPTSPEAATHNSYNPNIQLLLPDAIVPFGFELLANSDDLTHNKSDRILRVIVEFTRTFGSRGTIDAQYHEKLASRFDVDSHEAKTVGWGHYPSLKKEGAMHACAAACGAILGEAHEEEVEKLRTFGLYVGMIQGYANRFIMSSTEEKKEADRIIEELTNLARQELKYFDGRNLEPFSTFLFRL.

Residues Asp-124 and Gly-130 each contribute to the Mg(2+) site. Dimethylallyl diphosphate-binding residues include Lys-228, Gln-265, and Lys-280.

It belongs to the FPP/GGPP synthase family. As to quaternary structure, part of a heterodimeric geranyl(geranyl)diphosphate synthase. Mg(2+) is required as a cofactor. As to expression, mainly expressed in trichomes, and, to a lower extent, in roots, leaves, flowers and stems.

The protein resides in the plastid. It localises to the chloroplast thylakoid membrane. Its subcellular location is the chloroplast. Functionally, heterodimeric geranyl(geranyl)-diphosphate (GPP) synthase small subunit. The small subunit alone is inactive in vitro while the large subunit GGPPS1 catalyzes mainly the production of geranygeranyl-diphosphate in vitro. Upon association of the two subunits, the product profile changes and the production of gerany-diphosphate is strongly increased. The protein is Heterodimeric geranylgeranyl pyrophosphate synthase small subunit 1, chloroplastic of Cannabis sativa (Hemp).